We begin with the raw amino-acid sequence, 1340 residues long: Early transcription factor large subunit homolog (1340 aa).

The protein localises to the virion. Putative initation factor. The sequence is that of Early transcription factor large subunit homolog from Ornithodoros (relapsing fever ticks).